A 247-amino-acid polypeptide reads, in one-letter code: Cell division protein ZapD (247 aa).

This sequence belongs to the ZapD family. In terms of assembly, interacts with FtsZ.

It is found in the cytoplasm. Its function is as follows. Cell division factor that enhances FtsZ-ring assembly. Directly interacts with FtsZ and promotes bundling of FtsZ protofilaments, with a reduction in FtsZ GTPase activity. The protein is Cell division protein ZapD of Escherichia coli O7:K1 (strain IAI39 / ExPEC).